We begin with the raw amino-acid sequence, 435 residues long: tRNA(Ile)-lysidine synthase (435 aa).

24–29 (SGGLDS) is a binding site for ATP.

Belongs to the tRNA(Ile)-lysidine synthase family.

Its subcellular location is the cytoplasm. It carries out the reaction cytidine(34) in tRNA(Ile2) + L-lysine + ATP = lysidine(34) in tRNA(Ile2) + AMP + diphosphate + H(+). Its function is as follows. Ligates lysine onto the cytidine present at position 34 of the AUA codon-specific tRNA(Ile) that contains the anticodon CAU, in an ATP-dependent manner. Cytidine is converted to lysidine, thus changing the amino acid specificity of the tRNA from methionine to isoleucine. This Chromobacterium violaceum (strain ATCC 12472 / DSM 30191 / JCM 1249 / CCUG 213 / NBRC 12614 / NCIMB 9131 / NCTC 9757 / MK) protein is tRNA(Ile)-lysidine synthase.